Reading from the N-terminus, the 437-residue chain is Phosphomethylpyrimidine synthase (437 aa).

Substrate contacts are provided by residues asparagine 69, methionine 98, tyrosine 127, histidine 163, 185 to 187 (SRG), 226 to 229 (DACR), and glutamate 265. Histidine 269 contributes to the Zn(2+) binding site. Substrate is bound at residue tyrosine 292. Histidine 333 provides a ligand contact to Zn(2+). 3 residues coordinate [4Fe-4S] cluster: cysteine 409, cysteine 412, and cysteine 416.

It belongs to the ThiC family. The cofactor is [4Fe-4S] cluster.

The catalysed reaction is 5-amino-1-(5-phospho-beta-D-ribosyl)imidazole + S-adenosyl-L-methionine = 4-amino-2-methyl-5-(phosphooxymethyl)pyrimidine + CO + 5'-deoxyadenosine + formate + L-methionine + 3 H(+). It participates in cofactor biosynthesis; thiamine diphosphate biosynthesis. Catalyzes the synthesis of the hydroxymethylpyrimidine phosphate (HMP-P) moiety of thiamine from aminoimidazole ribotide (AIR) in a radical S-adenosyl-L-methionine (SAM)-dependent reaction. In Clostridium botulinum (strain Langeland / NCTC 10281 / Type F), this protein is Phosphomethylpyrimidine synthase.